A 406-amino-acid polypeptide reads, in one-letter code: Sprouty-related, EVH1 domain-containing protein 1 (406 aa).

Positions 3-120 constitute a WH1 domain; the sequence is GEQEPDDSYA…RGIRRAIEDL (118 aa). The interval 124–154 is disordered; that stretch reads LPASCHGESETSEDGPQVNKEDHYSTHNNDH. Over residues 142 to 154 the composition is skewed to basic and acidic residues; sequence NKEDHYSTHNNDH. The KBD domain occupies 195 to 247; that stretch reads PIRHVSFQDEDEIVRINPRDMIIRRYADYRHPDIFRNDVDREEPEDVTFFTKT. An SPR domain is found at 296-404; that stretch reads SCVYCQERFN…CGCCGGKHKA (109 aa).

In terms of processing, palmitoylated by ZDHHC17/HIP14. Ubiquitinated. Post-translationally, phosphorylated on tyrosine.

It localises to the cell membrane. Tyrosine kinase substrate that inhibits growth-factor-mediated activation of MAP kinase. The protein is Sprouty-related, EVH1 domain-containing protein 1 (spred1) of Xenopus tropicalis (Western clawed frog).